Here is a 718-residue protein sequence, read N- to C-terminus: Ribosomal RNA large subunit methyltransferase K/L (718 aa).

A THUMP domain is found at 43-154 (TQYRILLWSR…QDELVVSLDL (112 aa)).

It belongs to the methyltransferase superfamily. RlmKL family.

The protein resides in the cytoplasm. It carries out the reaction guanosine(2445) in 23S rRNA + S-adenosyl-L-methionine = N(2)-methylguanosine(2445) in 23S rRNA + S-adenosyl-L-homocysteine + H(+). The enzyme catalyses guanosine(2069) in 23S rRNA + S-adenosyl-L-methionine = N(2)-methylguanosine(2069) in 23S rRNA + S-adenosyl-L-homocysteine + H(+). Specifically methylates the guanine in position 2445 (m2G2445) and the guanine in position 2069 (m7G2069) of 23S rRNA. This Histophilus somni (strain 2336) (Haemophilus somnus) protein is Ribosomal RNA large subunit methyltransferase K/L.